The primary structure comprises 300 residues: Acetylglutamate kinase (300 aa).

Substrate-binding positions include 73 to 74 (GG), arginine 95, and asparagine 197.

It belongs to the acetylglutamate kinase family. ArgB subfamily.

It localises to the cytoplasm. It carries out the reaction N-acetyl-L-glutamate + ATP = N-acetyl-L-glutamyl 5-phosphate + ADP. It functions in the pathway amino-acid biosynthesis; L-arginine biosynthesis; N(2)-acetyl-L-ornithine from L-glutamate: step 2/4. Functionally, catalyzes the ATP-dependent phosphorylation of N-acetyl-L-glutamate. The polypeptide is Acetylglutamate kinase (Bordetella bronchiseptica (strain ATCC BAA-588 / NCTC 13252 / RB50) (Alcaligenes bronchisepticus)).